The chain runs to 199 residues: Holliday junction branch migration complex subunit RuvA (199 aa).

Residues 1–63 are domain I; it reads MIASVRGEVL…EDSMTLYGFS (63 aa). The tract at residues 64-141 is domain II; it reads DTESKDLFSL…DAVATTAGAA (78 aa). The interval 141–145 is flexible linker; it reads ASGAV. Residues 146-199 form a domain III region; sequence VGSSIRDQIVEALEGLGFPIKQAEQATDSVLAESPEATTSVALRSALSLLGKTR.

This sequence belongs to the RuvA family. In terms of assembly, homotetramer. Forms an RuvA(8)-RuvB(12)-Holliday junction (HJ) complex. HJ DNA is sandwiched between 2 RuvA tetramers; dsDNA enters through RuvA and exits via RuvB. An RuvB hexamer assembles on each DNA strand where it exits the tetramer. Each RuvB hexamer is contacted by two RuvA subunits (via domain III) on 2 adjacent RuvB subunits; this complex drives branch migration. In the full resolvosome a probable DNA-RuvA(4)-RuvB(12)-RuvC(2) complex forms which resolves the HJ.

The protein resides in the cytoplasm. The RuvA-RuvB-RuvC complex processes Holliday junction (HJ) DNA during genetic recombination and DNA repair, while the RuvA-RuvB complex plays an important role in the rescue of blocked DNA replication forks via replication fork reversal (RFR). RuvA specifically binds to HJ cruciform DNA, conferring on it an open structure. The RuvB hexamer acts as an ATP-dependent pump, pulling dsDNA into and through the RuvAB complex. HJ branch migration allows RuvC to scan DNA until it finds its consensus sequence, where it cleaves and resolves the cruciform DNA. In Rhodococcus erythropolis (strain PR4 / NBRC 100887), this protein is Holliday junction branch migration complex subunit RuvA.